Here is a 150-residue protein sequence, read N- to C-terminus: Ribonuclease H (150 aa).

Positions 2–143 (PAPILDIFVD…ADELANRAIE (142 aa)) constitute an RNase H type-1 domain. 4 residues coordinate Mg(2+): Asp-11, Glu-49, Asp-71, and Asp-135.

The protein belongs to the RNase H family. In terms of assembly, monomer. Requires Mg(2+) as cofactor.

Its subcellular location is the cytoplasm. The catalysed reaction is Endonucleolytic cleavage to 5'-phosphomonoester.. Functionally, endonuclease that specifically degrades the RNA of RNA-DNA hybrids. In Dichelobacter nodosus (strain VCS1703A), this protein is Ribonuclease H.